Here is a 237-residue protein sequence, read N- to C-terminus: Sugar fermentation stimulation protein homolog (237 aa).

This sequence belongs to the SfsA family.

This is Sugar fermentation stimulation protein homolog from Actinobacillus pleuropneumoniae serotype 5b (strain L20).